The primary structure comprises 586 residues: Actin-related protein 9 (586 aa).

The interval 141 to 169 (STPIVDKDADVDPLQRSTPDDTEPNSEEN) is disordered.

The protein belongs to the actin family. ARP8 subfamily.

This chain is Actin-related protein 9 (ARP9), found in Oryza sativa subsp. japonica (Rice).